The primary structure comprises 218 residues: Small ribosomal subunit protein uS4 (218 aa).

An S4 RNA-binding domain is found at 111-175 (RRLQTQVLRL…SPLKNESHPE (65 aa)). The disordered stretch occupies residues 192–218 (KAAAEAKQAREKPPERGGGRRKRGGRR). Residues 198–209 (KQAREKPPERGG) show a composition bias toward basic and acidic residues.

It belongs to the universal ribosomal protein uS4 family. As to quaternary structure, part of the 30S ribosomal subunit. Contacts protein S5. The interaction surface between S4 and S5 is involved in control of translational fidelity.

Functionally, one of the primary rRNA binding proteins, it binds directly to 16S rRNA where it nucleates assembly of the body of the 30S subunit. With S5 and S12 plays an important role in translational accuracy. The sequence is that of Small ribosomal subunit protein uS4 from Methanosarcina acetivorans (strain ATCC 35395 / DSM 2834 / JCM 12185 / C2A).